The primary structure comprises 567 residues: Malate synthase (567 aa).

R177 (proton acceptor) is an active-site residue. The Proton donor role is filled by D466. Positions 565-567 match the Microbody targeting signal motif; it reads CKL.

It belongs to the malate synthase family.

The protein resides in the glyoxysome. The enzyme catalyses glyoxylate + acetyl-CoA + H2O = (S)-malate + CoA + H(+). It participates in carbohydrate metabolism; glyoxylate cycle; (S)-malate from isocitrate: step 2/2. This chain is Malate synthase, found in Oryza sativa subsp. japonica (Rice).